The following is a 219-amino-acid chain: Probable octanoyltransferase (219 aa).

The BPL/LPL catalytic domain occupies 43-219 (QPPKPTIITS…NNLDSFLMSK (177 aa)). Residues 83-90 (RGGQTTFH), 151-153 (AIG), and 164-166 (GLA) contribute to the substrate site. Residue C182 is the Acyl-thioester intermediate of the active site.

This sequence belongs to the LipB family.

It carries out the reaction octanoyl-[ACP] + L-lysyl-[protein] = N(6)-octanoyl-L-lysyl-[protein] + holo-[ACP] + H(+). It participates in protein modification; protein lipoylation via endogenous pathway; protein N(6)-(lipoyl)lysine from octanoyl-[acyl-carrier-protein]: step 1/2. In terms of biological role, catalyzes the transfer of endogenously produced octanoic acid from octanoyl-acyl-carrier-protein onto the lipoyl domains of lipoate-dependent enzymes. Lipoyl-ACP can also act as a substrate although octanoyl-ACP is likely to be the physiological substrate. The chain is Probable octanoyltransferase from Schizosaccharomyces pombe (strain 972 / ATCC 24843) (Fission yeast).